Here is a 173-residue protein sequence, read N- to C-terminus: T-cell surface glycoprotein CD3 delta chain (173 aa).

The first 21 residues, 1-21 (MEHSGILASLILIAVLPQGSP), serve as a signal peptide directing secretion. Topologically, residues 22–105 (FKIQVTEYED…CVELDSGTMA (84 aa)) are extracellular. Cys37 and Cys73 are disulfide-bonded. N-linked (GlcNAc...) asparagine glycans are attached at residues Asn38, Asn55, and Asn74. A helical membrane pass occupies residues 106-126 (GVIFIDLIATLLLALGVYCFA). Over 127–173 (GHETGRPSGAAEVQALLKNEQLYQPLRDREDTQYSRLGGNWPRNKKS) the chain is Cytoplasmic. One can recognise an ITAM domain in the interval 138-166 (EVQALLKNEQLYQPLRDREDTQYSRLGGN). Residues Tyr149 and Tyr160 each carry the phosphotyrosine modification.

As to quaternary structure, the TCR-CD3 complex is composed of a CD3D/CD3E and a CD3G/CD3E heterodimers that preferentially associate with TCRalpha and TCRbeta, respectively, to form TCRalpha/CD3E/CD3G and TCRbeta/CD3G/CD3E trimers. In turn, the hexamer interacts with CD3Z homodimer to form the TCR-CD3 complex. Alternatively, TCRalpha and TCRbeta can be replaced by TCRgamma and TCRdelta. Interacts with coreceptors CD4 and CD8. Phosphorylated on Tyr residues after T-cell receptor triggering by LCK in association with CD4/CD8.

It localises to the membrane. Its function is as follows. Part of the TCR-CD3 complex present on T-lymphocyte cell surface that plays an essential role in adaptive immune response. When antigen presenting cells (APCs) activate T-cell receptor (TCR), TCR-mediated signals are transmitted across the cell membrane by the CD3 chains CD3D, CD3E, CD3G and CD3Z. All CD3 chains contain immunoreceptor tyrosine-based activation motifs (ITAMs) in their cytoplasmic domain. Upon TCR engagement, these motifs become phosphorylated by Src family protein tyrosine kinases LCK and FYN, resulting in the activation of downstream signaling pathways. In addition of this role of signal transduction in T-cell activation, CD3D plays an essential role in thymocyte differentiation. Indeed, participates in correct intracellular TCR-CD3 complex assembly and surface expression. In absence of a functional TCR-CD3 complex, thymocytes are unable to differentiate properly. Interacts with CD4 and CD8 and thus serves to establish a functional link between the TCR and coreceptors CD4 and CD8, which is needed for activation and positive selection of CD4 or CD8 T-cells. This is T-cell surface glycoprotein CD3 delta chain (Cd3d) from Mus musculus (Mouse).